We begin with the raw amino-acid sequence, 35 residues long: Sorbin and SH3 domain-containing protein 1 (35 aa).

Positions 1-8 (LNRDDDSD) constitute a SoHo domain. At Ser-15 the chain carries Phosphoserine. One can recognise an SH3 domain in the interval 22-35 (CDDGWFVGTSRRTK).

In terms of assembly, interacts with the long isoform of AFDN and with VCL. AFDN and VCL bind to SORBS1 in a competitive manner and do not form a ternary complex. Interacts with ABL1, CBL, CBLB and INPPL1/SHIP2 through the third SH3 domain. Interaction with ABL1 occurs only after insulin stimulation while this has no effect on the interaction with INPPL1. Interacts with the insulin receptor but dissociates from it following insulin stimulation. Also interacts with SCA7, PTK2/FAK1 and flotillin. Interacts (via SH3 domain 2) with PXN. Interacts (via third SH3 domain) with the Ten-1 ICD form of TENM1; the interaction induces the translocation of SORBS1 to the nucleus. O-glycosylated.

Its subcellular location is the cell junction. The protein resides in the adherens junction. The protein localises to the cell membrane. It localises to the cytoplasm. It is found in the cytoskeleton. Its subcellular location is the focal adhesion. The protein resides in the nucleus. The protein localises to the nucleus matrix. Its function is as follows. Plays a role in tyrosine phosphorylation of CBL by linking CBL to the insulin receptor. Required for insulin-stimulated glucose transport. Involved in formation of actin stress fibers and focal adhesions. The chain is Sorbin and SH3 domain-containing protein 1 from Rattus norvegicus (Rat).